A 168-amino-acid chain; its full sequence is Sec-independent protein translocase protein TatB (168 aa).

A helical transmembrane segment spans residues 1–21 (MIDLGISKLALIGAVALIVIG).

This sequence belongs to the TatB family. In terms of assembly, the Tat system comprises two distinct complexes: a TatABC complex, containing multiple copies of TatA, TatB and TatC subunits, and a separate TatA complex, containing only TatA subunits. Substrates initially bind to the TatABC complex, which probably triggers association of the separate TatA complex to form the active translocon.

It is found in the cell inner membrane. Functionally, part of the twin-arginine translocation (Tat) system that transports large folded proteins containing a characteristic twin-arginine motif in their signal peptide across membranes. Together with TatC, TatB is part of a receptor directly interacting with Tat signal peptides. TatB may form an oligomeric binding site that transiently accommodates folded Tat precursor proteins before their translocation. The chain is Sec-independent protein translocase protein TatB from Cupriavidus pinatubonensis (strain JMP 134 / LMG 1197) (Cupriavidus necator (strain JMP 134)).